We begin with the raw amino-acid sequence, 611 residues long: DNA-directed RNA polymerase subunit Rpo2C (611 aa).

4 residues coordinate Zn(2+): Cys547, Cys550, Cys565, and Cys568.

Belongs to the RNA polymerase beta chain family. As to quaternary structure, part of the RNA polymerase complex. Requires Zn(2+) as cofactor.

The protein resides in the cytoplasm. The enzyme catalyses RNA(n) + a ribonucleoside 5'-triphosphate = RNA(n+1) + diphosphate. DNA-dependent RNA polymerase (RNAP) catalyzes the transcription of DNA into RNA using the four ribonucleoside triphosphates as substrates. The Rpo2 subunit (Rpo2N and Rpo2C in this organism) is implicated in DNA promoter recognition and in nucleotide binding. The protein is DNA-directed RNA polymerase subunit Rpo2C of Methanococcus vannielii (strain ATCC 35089 / DSM 1224 / JCM 13029 / OCM 148 / SB).